Consider the following 187-residue polypeptide: Accessory gene regulator protein B (187 aa).

5 helical membrane passes run 49 to 69, 82 to 102, 106 to 126, 144 to 164, and 166 to 186; these read ISIF…YMLI, ILCY…LINI, FTYL…YAPA, LSII…PFYA, and FMLL…FPKE.

Belongs to the AgrB family.

The protein localises to the cell membrane. Essential for the production of a quorum sensing system signal molecule, the autoinducing peptide (AIP). This quorum sensing system is responsible for the regulation of the expression of virulence factor genes. Involved in the proteolytic processing of AgrD, the precursor of AIP. The sequence is that of Accessory gene regulator protein B from Staphylococcus aureus (strain Mu50 / ATCC 700699).